The sequence spans 241 residues: Small ribosomal subunit protein uS2 (241 aa).

Belongs to the universal ribosomal protein uS2 family.

The sequence is that of Small ribosomal subunit protein uS2 from Yersinia pestis bv. Antiqua (strain Antiqua).